The chain runs to 216 residues: Redox-sensing transcriptional repressor Rex (216 aa).

The H-T-H motif DNA-binding region spans 16 to 55 (VYYRYLNVLLNANKHRVSSTELSEAVQVDSATIRRDFSYF). 90–95 (GVGSLG) contributes to the NAD(+) binding site.

The protein belongs to the transcriptional regulatory Rex family. Homodimer.

The protein resides in the cytoplasm. Modulates transcription in response to changes in cellular NADH/NAD(+) redox state. This chain is Redox-sensing transcriptional repressor Rex, found in Limosilactobacillus fermentum (strain NBRC 3956 / LMG 18251) (Lactobacillus fermentum).